The chain runs to 235 residues: Transmembrane protein 176A (235 aa).

The residue at position 38 (serine 38) is a Phosphoserine. The next 4 membrane-spanning stretches (helical) occupy residues valine 55 to phenylalanine 75, serine 86 to tyrosine 106, tyrosine 113 to leucine 133, and alanine 193 to tyrosine 213.

The protein belongs to the TMEM176 family. In terms of assembly, interacts with MCOLN2.

Its subcellular location is the membrane. The sequence is that of Transmembrane protein 176A (TMEM176A) from Homo sapiens (Human).